The sequence spans 449 residues: Glutamate--tRNA ligase (449 aa).

The 'HIGH' region motif lies at Pro10 to Asn20. Positions Lys214–Arg218 match the 'KMSKS' region motif. Lys217 contacts ATP.

Belongs to the class-I aminoacyl-tRNA synthetase family. Glutamate--tRNA ligase type 1 subfamily. Monomer.

Its subcellular location is the cytoplasm. The enzyme catalyses tRNA(Glu) + L-glutamate + ATP = L-glutamyl-tRNA(Glu) + AMP + diphosphate. Catalyzes the attachment of glutamate to tRNA(Glu) in a two-step reaction: glutamate is first activated by ATP to form Glu-AMP and then transferred to the acceptor end of tRNA(Glu). This is Glutamate--tRNA ligase from Acholeplasma laidlawii (strain PG-8A).